A 707-amino-acid polypeptide reads, in one-letter code: Glucose starvation modulator protein 1 (707 aa).

Positions 20 to 48 (CTFCHQKHLQCSNERPCKNCVKRNIADQC) form a DNA-binding region, zn(2)-C6 fungal-type. 4 disordered regions span residues 63–122 (NSKA…PNDL), 154–188 (QPTHTVASETSSSYSQVQPQHHPESSVPPSAPPES), 260–283 (DQQQSSSEATGTSASKAVPMGPSH), and 385–404 (NVSSRGNNNTSNQKLQSAIA). Low complexity-rich tracts occupy residues 66-79 (AVAAATTPEATTTT) and 91-104 (SPSISFPSSSISPI). Composition is skewed to polar residues over residues 105–114 (NTSTFDTNGH) and 154–172 (QPTHTVASETSSSYSQVQP). The span at 178-188 (SSVPPSAPPES) shows a compositional bias: low complexity. Residues 260 to 274 (DQQQSSSEATGTSAS) show a composition bias toward polar residues. The region spanning 522-591 (DYEKLSQLNS…FQLFKSVAVG (70 aa)) is the PAS domain. Positions 621-652 (NYNNNYNHNYSHNNNNNNNSNNSNNNGMSTGA) are enriched in low complexity. The interval 621 to 659 (NYNNNYNHNYSHNNNNNNNSNNSNNNGMSTGAGNSGDGD) is disordered.

It belongs to the ERT1/acuK family.

Its subcellular location is the nucleus. Functionally, transcription factor which regulates nonfermentable carbon utilization. The chain is Glucose starvation modulator protein 1 (GSM1) from Lodderomyces elongisporus (strain ATCC 11503 / CBS 2605 / JCM 1781 / NBRC 1676 / NRRL YB-4239) (Yeast).